Consider the following 93-residue polypeptide: Phosphoribosyl-ATP pyrophosphatase (93 aa).

This sequence belongs to the PRA-PH family.

It is found in the cytoplasm. It catalyses the reaction 1-(5-phospho-beta-D-ribosyl)-ATP + H2O = 1-(5-phospho-beta-D-ribosyl)-5'-AMP + diphosphate + H(+). Its pathway is amino-acid biosynthesis; L-histidine biosynthesis; L-histidine from 5-phospho-alpha-D-ribose 1-diphosphate: step 2/9. The protein is Phosphoribosyl-ATP pyrophosphatase of Mycobacterium sp. (strain JLS).